The following is a 569-amino-acid chain: Protein ste7 (569 aa).

2 disordered regions span residues 195–219 (APIT…VNSV) and 255–274 (FSVS…SPPI). Low complexity predominate over residues 198-219 (TTSSATHTSQFSTSSSSSVNSV). Positions 264–274 (PQTPISMSPPI) are enriched in pro residues.

Belongs to the arrestin family.

Has a role in promoting meiosis whereby it is involved in establishing the mating pheromone signaling pathway. It also has a role in suppressing meiosis until the conjugation process is complete. The protein is Protein ste7 (ste7) of Schizosaccharomyces pombe (strain 972 / ATCC 24843) (Fission yeast).